Reading from the N-terminus, the 567-residue chain is Oxygen-dependent choline dehydrogenase (567 aa).

4 to 33 (DYIIIGAGSAGNVLAARLTEDADVTVLLLE) serves as a coordination point for FAD. The Proton acceptor role is filled by His473.

This sequence belongs to the GMC oxidoreductase family. FAD serves as cofactor.

The enzyme catalyses choline + A = betaine aldehyde + AH2. It carries out the reaction betaine aldehyde + NAD(+) + H2O = glycine betaine + NADH + 2 H(+). It functions in the pathway amine and polyamine biosynthesis; betaine biosynthesis via choline pathway; betaine aldehyde from choline (cytochrome c reductase route): step 1/1. Functionally, involved in the biosynthesis of the osmoprotectant glycine betaine. Catalyzes the oxidation of choline to betaine aldehyde and betaine aldehyde to glycine betaine at the same rate. The chain is Oxygen-dependent choline dehydrogenase from Yersinia pestis bv. Antiqua (strain Antiqua).